Consider the following 124-residue polypeptide: MAGGVGAQIVGRHIYGNLYGCEQQILKDEAALITIVKEAAKVANAILLSIGSYRFGPEGGLTVFAVVAESHISIHTWPEHGFATVDVYTCGDHTDPKAAFDYIVSKLKPRKVEAFFGDRSMYRE.

S70 (schiff-base intermediate with substrate; via pyruvic acid) is an active-site residue. S70 is modified (pyruvic acid (Ser); by autocatalysis). The Proton acceptor; for processing activity role is filled by H75. C90 acts as the Proton donor; for catalytic activity in catalysis.

This sequence belongs to the prokaryotic AdoMetDC family. Type 1 subfamily. Heterotetramer of two alpha and two beta chains arranged as a dimer of alpha/beta heterodimers. It depends on pyruvate as a cofactor. Is synthesized initially as an inactive proenzyme. Formation of the active enzyme involves a self-maturation process in which the active site pyruvoyl group is generated from an internal serine residue via an autocatalytic post-translational modification. Two non-identical subunits are generated from the proenzyme in this reaction, and the pyruvate is formed at the N-terminus of the alpha chain, which is derived from the carboxyl end of the proenzyme. The post-translation cleavage follows an unusual pathway, termed non-hydrolytic serinolysis, in which the side chain hydroxyl group of the serine supplies its oxygen atom to form the C-terminus of the beta chain, while the remainder of the serine residue undergoes an oxidative deamination to produce ammonia and the pyruvoyl group blocking the N-terminus of the alpha chain.

The enzyme catalyses S-adenosyl-L-methionine + H(+) = S-adenosyl 3-(methylsulfanyl)propylamine + CO2. The protein operates within amine and polyamine biosynthesis; S-adenosylmethioninamine biosynthesis; S-adenosylmethioninamine from S-adenosyl-L-methionine: step 1/1. Catalyzes the decarboxylation of S-adenosylmethionine to S-adenosylmethioninamine (dcAdoMet), the propylamine donor required for the synthesis of the polyamines spermine and spermidine from the diamine putrescine. The sequence is that of S-adenosylmethionine decarboxylase proenzyme from Pyrobaculum neutrophilum (strain DSM 2338 / JCM 9278 / NBRC 100436 / V24Sta) (Thermoproteus neutrophilus).